Reading from the N-terminus, the 31-residue chain is Basic phospholipase A2 13 (31 aa).

It belongs to the phospholipase A2 family. Group I subfamily. The cofactor is Ca(2+). Expressed by the venom gland.

It is found in the secreted. The catalysed reaction is a 1,2-diacyl-sn-glycero-3-phosphocholine + H2O = a 1-acyl-sn-glycero-3-phosphocholine + a fatty acid + H(+). Snake venom phospholipase A2 (PLA2) that inhibits neuromuscular transmission by blocking acetylcholine release from the nerve termini. PLA2 catalyzes the calcium-dependent hydrolysis of the 2-acyl groups in 3-sn-phosphoglycerides. This chain is Basic phospholipase A2 13, found in Bungarus fasciatus (Banded krait).